A 195-amino-acid chain; its full sequence is uncharacterized protein (195 aa).

Positions 1 to 16 (MIRTIIVFMLLTISFG) are cleaved as a signal peptide.

This is an uncharacterized protein from Acanthamoeba polyphaga mimivirus (APMV).